A 310-amino-acid polypeptide reads, in one-letter code: p-hydroxybenzoic acid efflux pump subunit AaeA (310 aa).

Residues 12–32 traverse the membrane as a helical segment; the sequence is AITVVLVILAFIAIFNAWVYY.

This sequence belongs to the membrane fusion protein (MFP) (TC 8.A.1) family.

The protein localises to the cell inner membrane. In terms of biological role, forms an efflux pump with AaeB. The protein is p-hydroxybenzoic acid efflux pump subunit AaeA of Shigella sonnei (strain Ss046).